Consider the following 738-residue polypeptide: Flowering time control protein FCA (738 aa).

Residues M1–R118 are disordered. 2 stretches are compositionally biased toward gly residues: residues R52–R70 and S81–G98. A compositionally biased stretch (basic and acidic residues) spans R109–R118. RRM domains follow at residues V122–G203 and H213–P293. Disordered regions lie at residues D292–Q451 and Q566–S595. Over residues S301–G311 the composition is skewed to gly residues. Residues H342–S358 show a composition bias toward polar residues. The span at T368–T377 shows a compositional bias: low complexity. Residues F383–M401 show a composition bias toward polar residues. Low complexity predominate over residues Q435–Q451. Residues P575–S595 show a composition bias toward polar residues. The WW domain maps to V609–E642. The interval M670 to S738 is disordered. Low complexity predominate over residues P683–Q706. Polar residues predominate over residues R723–Q732.

In terms of assembly, interacts with FY. Binds to SF1, FIK, RPRD1B, OsI_31983 and MADS8.

It localises to the nucleus. Functionally, plays a major role in the promotion of the transition of the vegetative meristem to reproductive development. Required for RNA-mediated chromatin silencing of a range of loci in the genome. Cotranscriptionally recognizes aberrant RNA and marks it for silencing. Controls alternative cleavage and polyadenylation on pre-mRNAs and antisense RNAs. Regulates flowering time, seed size and cell volume, probably via the modulation of cell size. The polypeptide is Flowering time control protein FCA (Oryza sativa subsp. indica (Rice)).